Consider the following 340-residue polypeptide: Mitochondrial amidoxime-reducing component 1 (340 aa).

Gly-2 carries N-myristoyl glycine lipidation. Topologically, residues 2–24 (GAGSWALTLFGFSAFRVPGQPRS) are mitochondrial matrix. The chain crosses the membrane as a helical; Signal-anchor for type II membrane protein span at residues 25–44 (TWLGVAALGLAAVALGTVAW). At 45 to 340 (RRARPRRRRR…VGDPVYLLGQ (296 aa)) the chain is on the cytoplasmic side. Positions 70, 71, and 95 each coordinate Mo-molybdopterin. An MOSC N-terminal region region spans residues 96 to 186 (FWLVINEEGN…KMQSCRLVHF (91 aa)). The MOSC domain maps to 191–338 (RPRSSRQMKA…IRVGDPVYLL (148 aa)). The Mo-molybdopterin site is built by Ser-214, Arg-241, Asn-243, Thr-274, Arg-275, Cys-276, and Tyr-320.

As to quaternary structure, component of a complex composed of cytochrome b5, NADH-cytochrome b5 reductase and MTARC1. Mo-molybdopterin is required as a cofactor.

It localises to the mitochondrion outer membrane. Its subcellular location is the membrane. The enzyme catalyses N(omega)-hydroxy-L-arginine + 2 Fe(II)-[cytochrome b5] + 2 H(+) = L-arginine + 2 Fe(III)-[cytochrome b5] + H2O. Functionally, catalyzes the reduction of N-oxygenated molecules, acting as a counterpart of cytochrome P450 and flavin-containing monooxygenases in metabolic cycles. As a component of prodrug-converting system, reduces a multitude of N-hydroxylated prodrugs particularly amidoximes, leading to increased drug bioavailability. May be involved in mitochondrial N(omega)-hydroxy-L-arginine (NOHA) reduction, regulating endogenous nitric oxide levels and biosynthesis. Postulated to cleave the N-OH bond of N-hydroxylated substrates in concert with electron transfer from NADH to cytochrome b5 reductase then to cytochrome b5, the ultimate electron donor that primes the active site for substrate reduction. The sequence is that of Mitochondrial amidoxime-reducing component 1 (Mtarc1) from Mus musculus (Mouse).